The primary structure comprises 487 residues: Diacylglycerol kinase 4 (487 aa).

A DAGKc domain is found at 86–242 (TPEVPLMVFV…LDSWNILITM (157 aa)).

The protein belongs to the eukaryotic diacylglycerol kinase family. As to quaternary structure, monomer. In terms of tissue distribution, highly expressed in pollen grains. Expressed in roots, hypocotyls, leaf vasculature, developing anthers and stigmas, and receptacles of siliques.

It is found in the endoplasmic reticulum. The protein resides in the cytoplasm. The protein localises to the cytosol. The catalysed reaction is a 1,2-diacyl-sn-glycerol + ATP = a 1,2-diacyl-sn-glycero-3-phosphate + ADP + H(+). Functionally, phosphorylates the second messenger diacylglycerol (DAG) to generate phosphatidic acid (PA), another important signaling molecule. PA is required for plant development and responses to abiotic stress and pathogen attack. May be involved in the accumulation of PA during cold stress. Involved in the regulation of PA and phosphatidylcholine biosynthesis in growing pollen tubes. Required for nitric oxide-dependent pollen tube growth and re-orientation responses. Functions together with DGK2 in male gametophyte development and biosynthesis of phosphatidylglycerol and phosphatidylinositol in the endoplasmic reticulum (ER). Involved in PA production for pollen grain growth, as well as leaf and root growth. Possesses guanylyl cyclase activity in vitro. This chain is Diacylglycerol kinase 4, found in Arabidopsis thaliana (Mouse-ear cress).